A 393-amino-acid chain; its full sequence is Phospho-N-acetylmuramoyl-pentapeptide-transferase (393 aa).

10 helical membrane-spanning segments follow: residues 29-49, 75-95, 101-121, 138-158, 193-213, 226-246, 263-283, 290-310, 315-335, and 370-390; these read RAVM…PIVI, TPTM…LLWF, FVWI…VDDW, YFWQ…SVSE, SISY…VIVG, GLAI…AYAT, AGEL…FLWF, VFMG…IAVI, VVLA…MAQV, and QVVV…LSSL.

It belongs to the glycosyltransferase 4 family. MraY subfamily. Mg(2+) serves as cofactor.

Its subcellular location is the cell inner membrane. The enzyme catalyses UDP-N-acetyl-alpha-D-muramoyl-L-alanyl-gamma-D-glutamyl-meso-2,6-diaminopimeloyl-D-alanyl-D-alanine + di-trans,octa-cis-undecaprenyl phosphate = di-trans,octa-cis-undecaprenyl diphospho-N-acetyl-alpha-D-muramoyl-L-alanyl-D-glutamyl-meso-2,6-diaminopimeloyl-D-alanyl-D-alanine + UMP. It participates in cell wall biogenesis; peptidoglycan biosynthesis. Functionally, catalyzes the initial step of the lipid cycle reactions in the biosynthesis of the cell wall peptidoglycan: transfers peptidoglycan precursor phospho-MurNAc-pentapeptide from UDP-MurNAc-pentapeptide onto the lipid carrier undecaprenyl phosphate, yielding undecaprenyl-pyrophosphoryl-MurNAc-pentapeptide, known as lipid I. The polypeptide is Phospho-N-acetylmuramoyl-pentapeptide-transferase (Methylibium petroleiphilum (strain ATCC BAA-1232 / LMG 22953 / PM1)).